We begin with the raw amino-acid sequence, 360 residues long: Phosphate acyltransferase (360 aa).

The protein belongs to the PlsX family. In terms of assembly, homodimer. Probably interacts with PlsY.

Its subcellular location is the cytoplasm. The catalysed reaction is a fatty acyl-[ACP] + phosphate = an acyl phosphate + holo-[ACP]. Its pathway is lipid metabolism; phospholipid metabolism. Catalyzes the reversible formation of acyl-phosphate (acyl-PO(4)) from acyl-[acyl-carrier-protein] (acyl-ACP). This enzyme utilizes acyl-ACP as fatty acyl donor, but not acyl-CoA. The sequence is that of Phosphate acyltransferase from Janthinobacterium sp. (strain Marseille) (Minibacterium massiliensis).